The following is a 116-amino-acid chain: Ly-6/neurotoxin-like protein 1 (116 aa).

Positions 1-20 are cleaved as a signal peptide; the sequence is MTPLLTLILVVLMGLPLAQA. The region spanning 21-107 is the UPAR/Ly6 domain; that stretch reads LDCHVCAYNG…TPATLALAPI (87 aa). Disulfide bonds link Cys23–Cys46, Cys26–Cys33, Cys39–Cys64, Cys68–Cys85, and Cys86–Cys91. Cys91 carries the GPI-anchor amidated cysteine lipid modification. A propeptide spans 92–116 (removed in mature form); sequence NGTGLATPATLALAPILLATLWGLL.

In terms of assembly, interacts with nAChRs containing alpha-4:beta-2 (CHRNA4:CHRNB2) and alpha-7 (CHRNA7) subunits. Interacts with CHRNA4 probably in the endoplasmic reticulum prior to nAChR pentameric assembly. Interacts with KCNA2/Potassium voltage-gated channel subfamily A member 2.

Its subcellular location is the cell membrane. It is found in the cell projection. The protein localises to the dendrite. The protein resides in the endoplasmic reticulum. In terms of biological role, acts in different tissues through interaction to nicotinic acetylcholine receptors (nAChRs). The proposed role as modulator of nAChR activity seems to be dependent on the nAChR subtype and stoichiometry, and to involve an effect on nAChR trafficking and its cell surface expression, and on single channel properties of the nAChR inserted in the plasma membrane. Modulates functional properties of nicotinic acetylcholine receptors (nAChRs) to prevent excessive excitation, and hence neurodegeneration. Enhances desensitization by increasing both the rate and extent of desensitization of alpha-4:beta-2-containing nAChRs and slowing recovery from desensitization. Promotes large amplitude ACh-evoked currents through alpha-4:beta-2 nAChRs. Is involved in regulation of the nAChR pentameric assembly in the endoplasmic reticulum. Shifts stoichiometry from high sensitivity alpha-4(2):beta-2(3) to low sensitivity alpha-4(3):beta-2(2) nAChR. In vitro modulates alpha-3:beta-4-containing nAChRs. Reduces cell surface expression of (alpha-3:beta-4)(2):beta-4 and (alpha-3:beta-4)(2):alpha-5 nAChRs suggesting an interaction with nAChR alpha-3(-):(+)beta-4 subunit interfaces and an allosteric mode. Corresponding single channel effects characterized by decreased unitary conductance, altered burst proportions and enhanced desensitization/inactivation seem to depend on nAChR alpha:alpha subunit interfaces and are greater in (alpha-3:beta-2)(2):alpha-3 when compared to (alpha-3:beta-2)(2):alpha-5 nAChRs. Prevents plasticity in the primary visual cortex late in life. The chain is Ly-6/neurotoxin-like protein 1 from Homo sapiens (Human).